A 462-amino-acid chain; its full sequence is MAPGRAVAGLLLLAATSLGHPSEGPELAFSEDVLSVFGANRSLSAAQLGRLLERLGAASQQGALDLGQLHFNQCLSAEDIFSLHGFSNVTQITSSNFSAICPAILQQLNFHPCEDLRKHNAKPSLSEVWGYGFLSVTIINLASLLGLILTPLIKKSYFPKILTYFVGLAIGTLFSNAIFQLIPEAFGFNPKIDNYVEKAVAVFGGFYMLFFVERTLKMLLKTYGQNDHTHFRNDDFGSKEKTHQPKTLPLPAVNGVTCYANPAVTEPNGHIHFDTVSVVSLQDGKTEPSSCTCLKGPKLSEIGTIAWMITLCDALHNFIDGLAIGASCTLSLLQGLSTSIAILCEEFPHELGDFVILLNAGMSTRQALLFNFLSACSCYVGLAFGILVGNNFAPNIIFALAGGMFLYISLADMFPEMNDMLREKVTGRQTDFTFFMIQNAGMLTGFTAILLITLYAGDIELQ.

The signal sequence occupies residues 1–19; it reads MAPGRAVAGLLLLAATSLG. Residues 20–132 are Extracellular-facing; the sequence is HPSEGPELAF…PSLSEVWGYG (113 aa). Residues Asn-40, Asn-88, and Asn-96 are each glycosylated (N-linked (GlcNAc...) asparagine). The chain crosses the membrane as a helical span at residues 133–153; the sequence is FLSVTIINLASLLGLILTPLI. At 154–160 the chain is on the cytoplasmic side; sequence KKSYFPK. A helical transmembrane segment spans residues 161–181; it reads ILTYFVGLAIGTLFSNAIFQL. The Extracellular segment spans residues 182 to 191; it reads IPEAFGFNPK. The chain crosses the membrane as a helical span at residues 192 to 212; the sequence is IDNYVEKAVAVFGGFYMLFFV. At 213-367 the chain is on the cytoplasmic side; that stretch reads ERTLKMLLKT…LNAGMSTRQA (155 aa). The XEXPHE-motif motif lies at 345–350; the sequence is EEFPHE. The chain crosses the membrane as a helical span at residues 368 to 388; sequence LLFNFLSACSCYVGLAFGILV. Over 389–390 the chain is Extracellular; the sequence is GN. A helical membrane pass occupies residues 391-411; the sequence is NFAPNIIFALAGGMFLYISLA. The Cytoplasmic portion of the chain corresponds to 412–431; sequence DMFPEMNDMLREKVTGRQTD. The chain crosses the membrane as a helical span at residues 432–452; it reads FTFFMIQNAGMLTGFTAILLI. The Extracellular portion of the chain corresponds to 453–462; it reads TLYAGDIELQ.

The protein belongs to the ZIP transporter (TC 2.A.5) family. As to quaternary structure, homodimer. N-glycosylated. N-glycosylation is not required for proper iron and zinc transport. Ubiquitously expressed.

It is found in the cell membrane. It localises to the apical cell membrane. Its subcellular location is the basolateral cell membrane. The protein localises to the lysosome membrane. The catalysed reaction is Zn(2+)(out) + 2 hydrogencarbonate(out) = Zn(2+)(in) + 2 hydrogencarbonate(in). It catalyses the reaction selenite(out) + Zn(2+)(out) + hydrogencarbonate(out) = selenite(in) + Zn(2+)(in) + hydrogencarbonate(in). It carries out the reaction Mn(2+)(out) + 2 hydrogencarbonate(out) = Mn(2+)(in) + 2 hydrogencarbonate(in). The enzyme catalyses Cd(2+)(out) + 2 hydrogencarbonate(out) = Cd(2+)(in) + 2 hydrogencarbonate(in). The catalysed reaction is Fe(2+)(out) + 2 hydrogencarbonate(out) = Fe(2+)(in) + 2 hydrogencarbonate(in). It catalyses the reaction Co(2+)(out) + 2 hydrogencarbonate(out) = Co(2+)(in) + 2 hydrogencarbonate(in). Electroneutral divalent metal cation:bicarbonate symporter of the plasma membrane mediating the cellular uptake of zinc and manganese, two divalent metal cations important for development, tissue homeostasis and immunity. Transports an electroneutral complex composed of a divalent metal cation and two bicarbonate anions or alternatively a bicarbonate and a selenite anion. Thereby, it also contributes to the cellular uptake of selenium, an essential trace metal and micronutrient. Also imports cadmium a non-essential metal which is cytotoxic and carcinogenic. May also transport iron and cobalt through membranes. Through zinc import, indirectly regulates the metal-dependent transcription factor MTF1 and the expression of some metalloproteases involved in cartilage catabolism and also probably heart development. Also indirectly regulates the expression of proteins involved in cell morphology and cytoskeleton organization. Indirectly controls innate immune function and inflammatory response by regulating zinc cellular uptake which in turn modulates the expression of genes specific of these processes. Protects, for instance, cells from injury and death at the onset of inflammation. By regulating zinc influx into monocytes also directly modulates their adhesion to endothelial cells and arteries. Reclaims manganese from the bile at the apical membrane of hepatocytes, thereby regulating the activity of the manganese-dependent enzymes through the systemic levels of the nutrient. Also participates in manganese reabsorption in the proximal tubule of the kidney. By mediating the extracellular uptake of manganese by cells of the blood-brain barrier, may also play a role in the transport of the micronutrient to the brain. With manganese cellular uptake also participates in mitochondrial proper function. Finally, also probably functions intracellularly, translocating zinc from lysosome to cytosol to indirectly enhance the expression of specific genes during TCR-mediated T cell activation. This is Metal cation symporter ZIP8 from Mus musculus (Mouse).